We begin with the raw amino-acid sequence, 129 residues long: Transcription factor bHLH138 (129 aa).

Residues 1–18 (MERYTKKNERFKAEEGKG) show a composition bias toward basic and acidic residues. The segment at 1–24 (MERYTKKNERFKAEEGKGSKKSRT) is disordered. A bHLH domain is found at 19 to 68 (SKKSRTFLTERERRALFNDRFFDLKNLIPNPTKGGEASIVQDGIVYINEL).

It belongs to the bHLH protein family.

Its subcellular location is the nucleus. This Arabidopsis thaliana (Mouse-ear cress) protein is Transcription factor bHLH138.